A 461-amino-acid polypeptide reads, in one-letter code: L-seryl-tRNA(Sec) selenium transferase (461 aa).

N6-(pyridoxal phosphate)lysine is present on Lys294.

Belongs to the SelA family. Pyridoxal 5'-phosphate serves as cofactor.

Its subcellular location is the cytoplasm. It carries out the reaction L-seryl-tRNA(Sec) + selenophosphate + H(+) = L-selenocysteinyl-tRNA(Sec) + phosphate. The protein operates within aminoacyl-tRNA biosynthesis; selenocysteinyl-tRNA(Sec) biosynthesis; selenocysteinyl-tRNA(Sec) from L-seryl-tRNA(Sec) (bacterial route): step 1/1. In terms of biological role, converts seryl-tRNA(Sec) to selenocysteinyl-tRNA(Sec) required for selenoprotein biosynthesis. In Actinobacillus pleuropneumoniae serotype 7 (strain AP76), this protein is L-seryl-tRNA(Sec) selenium transferase.